The primary structure comprises 649 residues: Echinoderm microtubule-associated protein-like 2 (649 aa).

The segment at 10 to 649 is tandem atypical propeller in EMLs; it reads KEVIFSVEDG…DTSVLQWRVV (640 aa). 2 coiled-coil regions span residues 13-58 and 73-114; these read IFSV…LKLE and YLLP…LAIH. 12 WD repeats span residues 56 to 93, 97 to 144, 151 to 192, 195 to 234, 241 to 280, 285 to 323, 369 to 406, 410 to 447, 452 to 489, 495 to 535, 564 to 602, and 609 to 648; these read KLEW…LYSV, RQRH…IWDS, HVLG…VWDW, ETKV…FWTL, KRQG…VWGK, ITQA…LWGS, FSLL…LWSS, QPLW…LLDT, LVAI…VYTV, KVSR…YWDP, FGIW…LFSY, and ALSH…QWRV.

The protein belongs to the WD repeat EMAP family. As to quaternary structure, homotrimer; self-association is mediated by the N-terminal coiled coil. In terms of assembly, interacts with GRID2 and may also interact with GRID1. Interacts with EML3. Binds unpolymerized tubulins via its WD repeat region. In terms of tissue distribution, ubiquitous.

The protein localises to the cytoplasm. It localises to the cytoskeleton. It is found in the spindle. In terms of biological role, tubulin binding protein that inhibits microtubule nucleation and growth, resulting in shorter microtubules. The protein is Echinoderm microtubule-associated protein-like 2 (EML2) of Homo sapiens (Human).